The primary structure comprises 302 residues: Bifunctional protein FolD (302 aa).

NADP(+) contacts are provided by residues 165 to 167 (GRS), Ser190, and Ile231.

This sequence belongs to the tetrahydrofolate dehydrogenase/cyclohydrolase family. Homodimer.

The enzyme catalyses (6R)-5,10-methylene-5,6,7,8-tetrahydrofolate + NADP(+) = (6R)-5,10-methenyltetrahydrofolate + NADPH. The catalysed reaction is (6R)-5,10-methenyltetrahydrofolate + H2O = (6R)-10-formyltetrahydrofolate + H(+). It participates in one-carbon metabolism; tetrahydrofolate interconversion. Catalyzes the oxidation of 5,10-methylenetetrahydrofolate to 5,10-methenyltetrahydrofolate and then the hydrolysis of 5,10-methenyltetrahydrofolate to 10-formyltetrahydrofolate. The protein is Bifunctional protein FolD of Prochlorococcus marinus (strain MIT 9313).